The primary structure comprises 389 residues: Alpha carbonic anhydrase 8 (389 aa).

An N-terminal signal peptide occupies residues 1 to 22; that stretch reads MKISSLGWVLVLIFISITIVSS. Residues 21–153 form a disordered region; that stretch reads SSAPAPKPPK…TKGNKGPAKW (133 aa). Residues 25 to 129 are compositionally biased toward pro residues; sequence APKPPKPKPA…PKPKPAPKPA (105 aa). The Alpha-carbonic anhydrase domain maps to 138-374; it reads TEFSYETKGN…VNKRKVYLYK (237 aa). A disulfide bond links cysteine 163 and cysteine 324. Residue asparagine 196 is glycosylated (N-linked (GlcNAc...) asparagine). Histidine 204 functions as the Proton acceptor in the catalytic mechanism. 3 residues coordinate Zn(2+): histidine 232, histidine 234, and histidine 251. A substrate-binding site is contributed by 320 to 321; that stretch reads TA. A glycan (N-linked (GlcNAc...) asparagine) is linked at asparagine 385.

This sequence belongs to the alpha-class carbonic anhydrase family. The cofactor is Zn(2+). Post-translationally, N-glycosylated.

The protein localises to the plastid. The protein resides in the chloroplast stroma. It catalyses the reaction hydrogencarbonate + H(+) = CO2 + H2O. Functionally, reversible hydration of carbon dioxide. In Arabidopsis thaliana (Mouse-ear cress), this protein is Alpha carbonic anhydrase 8 (ACA8).